The sequence spans 146 residues: Snaclec rhodocytin subunit beta (146 aa).

An N-terminal signal peptide occupies residues 1-23; sequence MGRFIFVSFGLLVVFLSLSGTGA. 3 cysteine pairs are disulfide-bonded: Cys-25/Cys-36, Cys-53/Cys-142, and Cys-119/Cys-134. A C-type lectin domain is found at 32 to 143; the sequence is YEGHCYKPFN…CSSTCSFVCK (112 aa).

This sequence belongs to the snaclec family. In terms of assembly, dimer (non-covalently linked) of heterodimers of subunits alpha and beta (disulfide-linked). In terms of tissue distribution, expressed by the venom gland.

The protein localises to the secreted. In terms of biological role, elicits platelet aggregation by the binding to the C-type lectin domain family 1 member B (CLEC1B/CLEC2). Binding leads to tyrosine phosphorylation in the cytoplasmic tail of CLEC1B, which promotes the binding of spleen tyrosine kinase (Syk), subsequent activation of PLCgamma2, and platelet activation and aggregation. Binding to GPIbalpha (GP1BA) and alpha2/beta-1 (ITGA2/ITGB1) may also induce aggregation, but this is controversial. The chain is Snaclec rhodocytin subunit beta from Calloselasma rhodostoma (Malayan pit viper).